The following is a 309-amino-acid chain: Assembly-complementing factor 4 (309 aa).

Disordered regions lie at residues 1–80 (MSED…ASPI), 164–240 (KSIN…ENTP), and 286–309 (VRSE…LFKR). 2 stretches are compositionally biased toward basic and acidic residues: residues 13–24 (ELHKLSIVDKHS) and 34–44 (KQHEVQPESKS). Phosphoserine is present on residues Ser-44, Ser-71, Ser-74, Ser-78, and Ser-165. Over residues 61 to 80 (SSPQRSTTNQSPVSDHASPI) the composition is skewed to polar residues. Low complexity-rich tracts occupy residues 174–188 (NNNV…LPNR), 205–214 (PSRSSESTPT), and 222–239 (PRNT…GENT). Over residues 287-298 (RSEDEDDEEFEP) the composition is skewed to acidic residues. A Phosphoserine modification is found at Ser-288.

Functionally, may be involved in actin cytoskeleton organization and biogenesis. This chain is Assembly-complementing factor 4 (ACF4), found in Saccharomyces cerevisiae (strain ATCC 204508 / S288c) (Baker's yeast).